Reading from the N-terminus, the 333-residue chain is Tetraacyldisaccharide 4'-kinase (333 aa).

Thr-60 to Thr-67 contacts ATP.

Belongs to the LpxK family.

It carries out the reaction a lipid A disaccharide + ATP = a lipid IVA + ADP + H(+). Its pathway is glycolipid biosynthesis; lipid IV(A) biosynthesis; lipid IV(A) from (3R)-3-hydroxytetradecanoyl-[acyl-carrier-protein] and UDP-N-acetyl-alpha-D-glucosamine: step 6/6. Transfers the gamma-phosphate of ATP to the 4'-position of a tetraacyldisaccharide 1-phosphate intermediate (termed DS-1-P) to form tetraacyldisaccharide 1,4'-bis-phosphate (lipid IVA). The chain is Tetraacyldisaccharide 4'-kinase from Azotobacter vinelandii (strain DJ / ATCC BAA-1303).